The primary structure comprises 238 residues: Pyridoxine 5'-phosphate synthase (238 aa).

3-amino-2-oxopropyl phosphate is bound at residue asparagine 7. 1-deoxy-D-xylulose 5-phosphate is bound at residue 9–10 (DH). Residue arginine 18 coordinates 3-amino-2-oxopropyl phosphate. Histidine 43 (proton acceptor) is an active-site residue. Residues arginine 45 and histidine 50 each contribute to the 1-deoxy-D-xylulose 5-phosphate site. Residue glutamate 70 is the Proton acceptor of the active site. Position 100 (threonine 100) interacts with 1-deoxy-D-xylulose 5-phosphate. Histidine 190 (proton donor) is an active-site residue. 3-amino-2-oxopropyl phosphate contacts are provided by residues glycine 191 and 212-213 (GH).

This sequence belongs to the PNP synthase family. Homooctamer; tetramer of dimers.

The protein localises to the cytoplasm. It catalyses the reaction 3-amino-2-oxopropyl phosphate + 1-deoxy-D-xylulose 5-phosphate = pyridoxine 5'-phosphate + phosphate + 2 H2O + H(+). The protein operates within cofactor biosynthesis; pyridoxine 5'-phosphate biosynthesis; pyridoxine 5'-phosphate from D-erythrose 4-phosphate: step 5/5. Functionally, catalyzes the complicated ring closure reaction between the two acyclic compounds 1-deoxy-D-xylulose-5-phosphate (DXP) and 3-amino-2-oxopropyl phosphate (1-amino-acetone-3-phosphate or AAP) to form pyridoxine 5'-phosphate (PNP) and inorganic phosphate. The sequence is that of Pyridoxine 5'-phosphate synthase from Prochlorococcus marinus (strain MIT 9215).